We begin with the raw amino-acid sequence, 283 residues long: Pantothenate synthetase (283 aa).

34–41 (MGALHDGH) is an ATP binding site. His41 acts as the Proton donor in catalysis. Gln65 provides a ligand contact to (R)-pantoate. Gln65 contributes to the beta-alanine binding site. 152–155 (GEKD) is an ATP binding site. Gln158 provides a ligand contact to (R)-pantoate. Residues Val181 and 189–192 (MSSR) contribute to the ATP site.

Belongs to the pantothenate synthetase family. In terms of assembly, homodimer.

The protein localises to the cytoplasm. The enzyme catalyses (R)-pantoate + beta-alanine + ATP = (R)-pantothenate + AMP + diphosphate + H(+). It functions in the pathway cofactor biosynthesis; (R)-pantothenate biosynthesis; (R)-pantothenate from (R)-pantoate and beta-alanine: step 1/1. Its function is as follows. Catalyzes the condensation of pantoate with beta-alanine in an ATP-dependent reaction via a pantoyl-adenylate intermediate. The chain is Pantothenate synthetase from Bradyrhizobium sp. (strain BTAi1 / ATCC BAA-1182).